A 433-amino-acid polypeptide reads, in one-letter code: Histidinol dehydrogenase (433 aa).

3 residues coordinate substrate: serine 236, glutamine 258, and histidine 261. Residues glutamine 258 and histidine 261 each coordinate Zn(2+). Residues glutamate 325 and histidine 326 each act as proton acceptor in the active site. Substrate contacts are provided by histidine 326, aspartate 359, glutamate 413, and histidine 418. Aspartate 359 is a Zn(2+) binding site. Residue histidine 418 coordinates Zn(2+).

Belongs to the histidinol dehydrogenase family. Zn(2+) is required as a cofactor.

It carries out the reaction L-histidinol + 2 NAD(+) + H2O = L-histidine + 2 NADH + 3 H(+). It participates in amino-acid biosynthesis; L-histidine biosynthesis; L-histidine from 5-phospho-alpha-D-ribose 1-diphosphate: step 9/9. Functionally, catalyzes the sequential NAD-dependent oxidations of L-histidinol to L-histidinaldehyde and then to L-histidine. The sequence is that of Histidinol dehydrogenase from Pseudoalteromonas translucida (strain TAC 125).